The sequence spans 145 residues: D-aminoacyl-tRNA deacylase (145 aa).

Positions Gly-137–Pro-138 match the Gly-cisPro motif, important for rejection of L-amino acids motif.

It belongs to the DTD family. As to quaternary structure, homodimer.

It localises to the cytoplasm. The enzyme catalyses glycyl-tRNA(Ala) + H2O = tRNA(Ala) + glycine + H(+). It catalyses the reaction a D-aminoacyl-tRNA + H2O = a tRNA + a D-alpha-amino acid + H(+). An aminoacyl-tRNA editing enzyme that deacylates mischarged D-aminoacyl-tRNAs. Also deacylates mischarged glycyl-tRNA(Ala), protecting cells against glycine mischarging by AlaRS. Acts via tRNA-based rather than protein-based catalysis; rejects L-amino acids rather than detecting D-amino acids in the active site. By recycling D-aminoacyl-tRNA to D-amino acids and free tRNA molecules, this enzyme counteracts the toxicity associated with the formation of D-aminoacyl-tRNA entities in vivo and helps enforce protein L-homochirality. The polypeptide is D-aminoacyl-tRNA deacylase (Deinococcus radiodurans (strain ATCC 13939 / DSM 20539 / JCM 16871 / CCUG 27074 / LMG 4051 / NBRC 15346 / NCIMB 9279 / VKM B-1422 / R1)).